A 563-amino-acid chain; its full sequence is Probable ganciclovir kinase (563 aa).

The span at 1–16 shows a compositional bias: polar residues; that stretch reads MDNGVETPQGQKTQPI. The tract at residues 1 to 33 is disordered; sequence MDNGVETPQGQKTQPINLPPDRKRLRKHDGLGK. Residues 202-210 and Lys-219 contribute to the ATP site; that span reads LGVGAYGKV. The Proton acceptor role is filled by Asp-314.

The protein belongs to the protein kinase superfamily. Tyr protein kinase family. HCMV ganciclovir subfamily.

Phosphorylates the antiviral nucleoside analog ganciclovir. The sequence is that of Probable ganciclovir kinase (U69) from Human herpesvirus 6B (strain Z29) (HHV-6 variant B).